The primary structure comprises 765 residues: Probable dipeptidyl peptidase 4 (765 aa).

The first 14 residues, 1-14 (MKWSILLLVGCAAA), serve as a signal peptide directing secretion. N-linked (GlcNAc...) asparagine glycans are attached at residues N35, N78, N101, N110, N169, N218, N465, and N490. The active-site Charge relay system is the S613. N-linked (GlcNAc...) asparagine glycosylation occurs at N665. Catalysis depends on charge relay system residues D690 and H725.

This sequence belongs to the peptidase S9B family.

Its subcellular location is the secreted. It catalyses the reaction Release of an N-terminal dipeptide, Xaa-Yaa-|-Zaa-, from a polypeptide, preferentially when Yaa is Pro, provided Zaa is neither Pro nor hydroxyproline.. Its function is as follows. Extracellular dipeptidyl-peptidase which removes N-terminal dipeptides sequentially from polypeptides having unsubstituted N-termini provided that the penultimate residue is proline. Contributes to pathogenicity. This Aspergillus fumigatus (strain CBS 144.89 / FGSC A1163 / CEA10) (Neosartorya fumigata) protein is Probable dipeptidyl peptidase 4 (dpp4).